Here is a 605-residue protein sequence, read N- to C-terminus: Elongation factor 4 (605 aa).

One can recognise a tr-type G domain in the interval 8-190 (RRVRNFCIVA…AIITRIPPPQ (183 aa)). Residues 20–25 (DHGKST) and 137–140 (NKID) contribute to the GTP site.

It belongs to the TRAFAC class translation factor GTPase superfamily. Classic translation factor GTPase family. LepA subfamily.

It localises to the cell inner membrane. The catalysed reaction is GTP + H2O = GDP + phosphate + H(+). Required for accurate and efficient protein synthesis under certain stress conditions. May act as a fidelity factor of the translation reaction, by catalyzing a one-codon backward translocation of tRNAs on improperly translocated ribosomes. Back-translocation proceeds from a post-translocation (POST) complex to a pre-translocation (PRE) complex, thus giving elongation factor G a second chance to translocate the tRNAs correctly. Binds to ribosomes in a GTP-dependent manner. This Treponema pallidum (strain Nichols) protein is Elongation factor 4.